Here is an 85-residue protein sequence, read N- to C-terminus: Large ribosomal subunit protein bL27 (85 aa).

Positions 1 to 20 (MAHKKAGGSTRNGRDSEAKR) are disordered.

This sequence belongs to the bacterial ribosomal protein bL27 family.

This is Large ribosomal subunit protein bL27 from Escherichia coli O139:H28 (strain E24377A / ETEC).